The chain runs to 358 residues: MGITIKKSTAEQVLRKAYEAAASDDVFLEDWIFLATSLREVDAPRTYTAALVTALLARACDDRVDPRSIKEKYDDRAFSLRTLCHGVVVPMSVELGFDLGATGREPINNQPFFRYDQYSEIVRVQTKARPYLDRVSSALARVDEEDYSTEESFRALVAVLAVCISVANKKQRVAVGSAIVEASLIAETQSFVVSGHDVPRKLQACVAAGLDMVYSEVVSRRINDPSRDFPGDVQVILDGDPLLTVEVRGKSVSWEGLEQFVSSATYAGFRRVALMVDAASHVSLMSADDLTSALERKYECIVKVNESVSSFLRDVFVWSPRDVHSILSAFPEAMYRRMIEIEVREPELDRWAEIFPET.

The enzyme catalyses Endonucleolytic cleavage of DNA to give specific double-stranded fragments with terminal 5'-phosphates.. Functionally, a subtype P restriction enzyme that recognizes the double-stranded sequence 5'-GAGCTC-3' and cleaves after T-5. The protein is Type II restriction enzyme SacI of Streptomyces achromogenes.